The sequence spans 426 residues: Phosphomethylpyrimidine synthase (426 aa).

Substrate-binding positions include Met-94, Tyr-123, His-162, Ser-184 to Gly-186, Asn-225 to Arg-228, and Glu-264. His-268 lines the Zn(2+) pocket. Residue Tyr-291 coordinates substrate. His-332 serves as a coordination point for Zn(2+). Cys-406, Cys-409, and Cys-413 together coordinate [4Fe-4S] cluster.

The protein belongs to the ThiC family. [4Fe-4S] cluster serves as cofactor.

The catalysed reaction is 5-amino-1-(5-phospho-beta-D-ribosyl)imidazole + S-adenosyl-L-methionine = 4-amino-2-methyl-5-(phosphooxymethyl)pyrimidine + CO + 5'-deoxyadenosine + formate + L-methionine + 3 H(+). Its pathway is cofactor biosynthesis; thiamine diphosphate biosynthesis. Catalyzes the synthesis of the hydroxymethylpyrimidine phosphate (HMP-P) moiety of thiamine from aminoimidazole ribotide (AIR) in a radical S-adenosyl-L-methionine (SAM)-dependent reaction. This Methanospirillum hungatei JF-1 (strain ATCC 27890 / DSM 864 / NBRC 100397 / JF-1) protein is Phosphomethylpyrimidine synthase.